Reading from the N-terminus, the 314-residue chain is Short chain dehydrogenase atnD (314 aa).

Positions 41, 66, 90, and 116 each coordinate NADP(+). Catalysis depends on proton donor residues serine 171 and tyrosine 204. NADP(+) contacts are provided by tyrosine 204 and lysine 208. Lysine 208 acts as the Lowers pKa of active site Tyr in catalysis.

This sequence belongs to the short-chain dehydrogenases/reductases (SDR) family.

It functions in the pathway secondary metabolite biosynthesis. Functionally, short chain dehydrogenase; part of the gene cluster that mediates the biosynthesis of aspercryptins, linear lipopeptides built from six amino acids including 2 highly unusual and nonproteogenic amino acids, 2-amino-octanoic acid (2aoa) and 2-amino-dodecanol (2adol). The core structure of aspercryptins is as follows: Ser/Ala-Thr-Ile/Val-2aoa-Asn-2adol. The first step of aspercryptin biosynthesis is the generation of the fatty acid precursors, octanoic and dodecanoic acids, by the FAS subunits atnF and atnM. The fatty acid precursors are likely transformed into the corresponding alpha-amino fatty acids in three steps. First, they are hydroxylated by the cytochrome P450 monooxygenase atnE, then oxidized to the corresponding alpha-keto acids by the NAD(P)-dependent oxidoreductase atnD, and finally converted to the alpha-amino fatty acids by the PLP-dependent aminotransferases atnH or atnJ. the alpha-amino fatty acids, 2-amino-octanoic and 2-amino-dodecanoic acids, are recognized, activated, and covalently tethered to the NRPS atnA by its fourth and sixth adenylation domains. The second module of atnA is the Thr module and contains an epimerase (E) domain responsible for the epimerization of Thr to D-allo-Thr. Additionally, despite atnA having only one epimerase domain, the first amino acid of aspercryptin A1 is D-Ser, suggesting that serine is either loaded directly as D-Ser on the first module or that the epimerase domain in the threonine module epimerizes both L-Ser and L-Thr. After condensation of the hexapeptide of aspercryptin, the C-terminal reductase (TE) domain might be involved in the reductive release and production of the aldehyde hexapeptide. Further reduction would generate aspercryptins. The variety of aspercryptins produced reflects the flexibility of the atnA NRPS, allowing incorporation of alanine instead of serine, valine for isoleucine, and a C10 fatty amino alcohol instead of the C12 version. AtnB seems to be involved in the selectivity for Ile versus Val by the third module. Moreover, type B, C and D aspercryptins have an additional N-terminal cichorine, acetyl and propionyl group respectively. The sequence is that of Short chain dehydrogenase atnD from Emericella nidulans (strain FGSC A4 / ATCC 38163 / CBS 112.46 / NRRL 194 / M139) (Aspergillus nidulans).